A 570-amino-acid chain; its full sequence is MDSVSNLKSTNFQNNNDPKESVEEAVLRYVGVDLKNHIKKTKKKLKKQKKRKHGSKMSHEDEDTDMDWYLKTSGSKDLRKVDDIEPNSVAVAAVAAAYNSSMREKDKRSCHKKSSNSRSERKKHRKRKSSKERKAKIKMVLDPQLTTLDDGITTTAFLPDDLIAETAFDKYVDTEKAYLAKHPSKSLEVNEDDKENNFNNNSSTLVRIYTDLEGIPNDGSYIKRTPKIPEKDVKSDDLILAPEENNGDTALLRSDIVKASVIDGAITKSIGKKFTPSEENALDQFIEEYMKIRGLDRRQMCERIWSTDGVIRDGFWANISKVLPYRTRSSIYKHIRRKYHIFEQRGKWTPEEDQELARLCLEKEGHWTEVGKLLGRMPEDCRDRWRNYMKCGSKRGSKRWSKEEEELLTTVVNEMIEEAHQYQRMKALEAANKNDRYNQMYSRGPKGKRISDNPTFKDMINWTVVSERMSGTRSRIQCRYKWNKLVTDEAARSMLSIPVSERKWLLERLKQLPKTSYSNIDWNSIATYKPGYPRTGLELRLCYEQMREKIHDFKGRSTAEIIDSLLEQIN.

Residues 1–16 (MDSVSNLKSTNFQNNN) show a composition bias toward polar residues. 3 disordered regions span residues 1 to 21 (MDSV…PKES), 37 to 68 (HIKK…DMDW), and 100 to 138 (SSMR…AKIK). Residues 37-56 (HIKKTKKKLKKQKKRKHGSK) show a composition bias toward basic residues. Thr-64 bears the Phosphothreonine mark. Basic residues predominate over residues 108-137 (RSCHKKSSNSRSERKKHRKRKSSKERKAKI). A Myb-like 1 domain is found at 273-339 (KFTPSEENAL…SIYKHIRRKY (67 aa)). Residues 340–391 (HIFEQRGKWTPEEDQELARLCLEKEGHWTEVGKLLGRMPEDCRDRWRNYMKC) enclose the HTH myb-type domain. A DNA-binding region (H-T-H motif) is located at residues 367-389 (WTEVGKLLGRMPEDCRDRWRNYM). Myb-like domains follow at residues 392–486 (GSKR…NKLV) and 493–549 (SMLS…MREK).

As to quaternary structure, interacts with FOB1. Interacts with the RENT complex subunits NET1 and SIR2.

It localises to the nucleus. The protein resides in the nucleolus. Functionally, DNA-binding protein that recognizes sequence-specific replication termini (Ter sites) within rDNA. Binds to rDNA terminator elements and mediates efficient RNA polymerase I transcription termination. Required for rDNA silencing at the non-transcribed spacer 1 (NTS1). Promotes the association of SIR2 with NTS1 and contributes to maintenance of rDNA stability. This is RNA polymerase I termination factor from Saccharomyces cerevisiae (strain ATCC 204508 / S288c) (Baker's yeast).